Consider the following 199-residue polypeptide: Peptidyl-tRNA hydrolase (199 aa).

Y15 is a binding site for tRNA. The active-site Proton acceptor is the H20. Residues Y66, N68, and N114 each contribute to the tRNA site.

The protein belongs to the PTH family. In terms of assembly, monomer.

It localises to the cytoplasm. The enzyme catalyses an N-acyl-L-alpha-aminoacyl-tRNA + H2O = an N-acyl-L-amino acid + a tRNA + H(+). In terms of biological role, hydrolyzes ribosome-free peptidyl-tRNAs (with 1 or more amino acids incorporated), which drop off the ribosome during protein synthesis, or as a result of ribosome stalling. Catalyzes the release of premature peptidyl moieties from peptidyl-tRNA molecules trapped in stalled 50S ribosomal subunits, and thus maintains levels of free tRNAs and 50S ribosomes. In Burkholderia ambifaria (strain MC40-6), this protein is Peptidyl-tRNA hydrolase.